The chain runs to 564 residues: E3 ubiquitin-protein ligase TRIM16 (564 aa).

A disordered region spans residues 1–70 (MAELDLMAPG…DPAEQGDPAG (70 aa)). The segment covering 24-39 (SPDSGSPSPDSGSASP) has biased composition (low complexity). B box-type zinc fingers lie at residues 72-122 (GKEV…LTEP) and 126-165 (HNWRYCPAHHSPLSAFCCPDQQCICQDCCQEHSGHTIVSL). S116 is subject to Phosphoserine. The Zn(2+) site is built by C131, H134, C153, and H157. 3 coiled-coil regions span residues 165–203 (LDAARRDKEAELQCTQLDLERKLKLNENAISRLQANQKS), 243–274 (AALSQANGIKAHLEYRSAEMEKSKQELERMAA), and 320–340 (HLIQLLENYKKKLQEFSKEEE). Position 203 is a phosphoserine (S203). The B30.2/SPRY domain occupies 355–553 (YWTSKPEPST…RIVDLGEEPE (199 aa)).

It belongs to the TRIM/RBCC family. Homodimerizes via its coiled-coil domain. Heterodimerizes with MID1, TRIM24 and PML. Interacts with Galectin-3/LGALS3 in a ULK1-dependent manner; this interaction mediates autophagy of damage endomembranes. Interacts with BECN1. Interacts with ATG16L1. Interacts with p62/SQSTM and LC3B/MAP1LC3B. In terms of processing, phosphorylated by ULK1. Auto-ubiquitinates via its B-Boxes.

The protein localises to the cytoplasm. It catalyses the reaction S-ubiquitinyl-[E2 ubiquitin-conjugating enzyme]-L-cysteine + [acceptor protein]-L-lysine = [E2 ubiquitin-conjugating enzyme]-L-cysteine + N(6)-ubiquitinyl-[acceptor protein]-L-lysine.. Functionally, E3 ubiquitin ligase that plays an essential role in the organization of autophagic response and ubiquitination upon lysosomal and phagosomal damages. Plays a role in the stress-induced biogenesis and degradation of protein aggresomes by regulating the p62-KEAP1-NRF2 signaling and particularly by modulating the ubiquitination levels and thus stability of NRF2. Acts as a scaffold protein and facilitates autophagic degradation of protein aggregates by interacting with p62/SQSTM, ATG16L1 and LC3B/MAP1LC3B. In turn, protects the cell against oxidative stress-induced cell death as a consequence of endomembrane damage. This chain is E3 ubiquitin-protein ligase TRIM16 (TRIM16), found in Pongo abelii (Sumatran orangutan).